A 152-amino-acid chain; its full sequence is Protein eva-1 homolog A (152 aa).

Residues 1 to 60 (MRLPLSHSPEHVEMALLSNILAAYSFVSENPERAALYFVSGVCIGLVLTLAALVIRISCH) are necessary for the localization and biological activity. A helical transmembrane segment spans residues 35–55 (ALYFVSGVCIGLVLTLAALVI). The tract at residues 70–97 (KFLQDRESSSDSSDSEDGSEDTVSDLSV) is disordered. The segment covering 82–92 (SDSEDGSEDTV) has biased composition (acidic residues). Thr106 is subject to Phosphothreonine. At Ser114 the chain carries Phosphoserine; by FAM20C.

It belongs to the EVA1 family. In terms of tissue distribution, expressed in lung, kidney, liver, pancreas, placenta, but not in heart and skeletal muscle.

Its subcellular location is the endoplasmic reticulum membrane. It is found in the lysosome membrane. In terms of biological role, acts as a regulator of programmed cell death, mediating both autophagy and apoptosis. In Homo sapiens (Human), this protein is Protein eva-1 homolog A (EVA1A).